The primary structure comprises 307 residues: tRNA-cytidine(32) 2-sulfurtransferase (307 aa).

A PP-loop motif motif is present at residues 44 to 49 (SGGKDS). The [4Fe-4S] cluster site is built by Cys119, Cys122, and Cys210.

Belongs to the TtcA family. In terms of assembly, homodimer. Mg(2+) serves as cofactor. It depends on [4Fe-4S] cluster as a cofactor.

Its subcellular location is the cytoplasm. The enzyme catalyses cytidine(32) in tRNA + S-sulfanyl-L-cysteinyl-[cysteine desulfurase] + AH2 + ATP = 2-thiocytidine(32) in tRNA + L-cysteinyl-[cysteine desulfurase] + A + AMP + diphosphate + H(+). Its pathway is tRNA modification. Functionally, catalyzes the ATP-dependent 2-thiolation of cytidine in position 32 of tRNA, to form 2-thiocytidine (s(2)C32). The sulfur atoms are provided by the cysteine/cysteine desulfurase (IscS) system. This Aliivibrio fischeri (strain ATCC 700601 / ES114) (Vibrio fischeri) protein is tRNA-cytidine(32) 2-sulfurtransferase.